A 90-amino-acid chain; its full sequence is UPF0335 protein R02793 (90 aa).

This sequence belongs to the UPF0335 family.

The sequence is that of UPF0335 protein R02793 from Rhizobium meliloti (strain 1021) (Ensifer meliloti).